The following is a 306-amino-acid chain: Glutaminase (306 aa).

Serine 64, asparagine 115, glutamate 159, asparagine 166, tyrosine 190, tyrosine 242, and valine 260 together coordinate substrate.

This sequence belongs to the glutaminase family. Homotetramer.

It catalyses the reaction L-glutamine + H2O = L-glutamate + NH4(+). This chain is Glutaminase, found in Aeromonas hydrophila subsp. hydrophila (strain ATCC 7966 / DSM 30187 / BCRC 13018 / CCUG 14551 / JCM 1027 / KCTC 2358 / NCIMB 9240 / NCTC 8049).